Reading from the N-terminus, the 234-residue chain is Probable chemoreceptor glutamine deamidase CheD (234 aa).

Belongs to the CheD family.

It catalyses the reaction L-glutaminyl-[protein] + H2O = L-glutamyl-[protein] + NH4(+). Probably deamidates glutamine residues to glutamate on methyl-accepting chemotaxis receptors (MCPs), playing an important role in chemotaxis. This is Probable chemoreceptor glutamine deamidase CheD from Burkholderia pseudomallei (strain 1710b).